Reading from the N-terminus, the 315-residue chain is Homoserine kinase (315 aa).

97–107 (PPARGLGSSAT) lines the ATP pocket.

This sequence belongs to the GHMP kinase family. Homoserine kinase subfamily.

It is found in the cytoplasm. The enzyme catalyses L-homoserine + ATP = O-phospho-L-homoserine + ADP + H(+). It participates in amino-acid biosynthesis; L-threonine biosynthesis; L-threonine from L-aspartate: step 4/5. Functionally, catalyzes the ATP-dependent phosphorylation of L-homoserine to L-homoserine phosphate. This Prochlorococcus marinus (strain MIT 9215) protein is Homoserine kinase.